The primary structure comprises 404 residues: uncharacterized protein (404 aa).

Helical transmembrane passes span 37 to 57 (LLILSVIAFFWGLLGVVFVQF), 92 to 112 (IYNVIFWLSQILINIPLFVLG), 122 to 142 (LLTLYFVVVSNVFGFAFSYIP), 188 to 208 (MFYALIWGFLQAVFYSVILII), 230 to 250 (IGGILFIVNTLSFLIGYTIGT), and 272 to 292 (AFFLSPNLVFTIFMNIILGIF).

It is found in the cell membrane. This is an uncharacterized protein from Mycoplasma pneumoniae (strain ATCC 29342 / M129 / Subtype 1) (Mycoplasmoides pneumoniae).